Reading from the N-terminus, the 311-residue chain is Meteorin-like protein (311 aa).

The signal sequence occupies residues 1 to 45 (MRGAVWAARRRAGQQWPRSPGPGPGPPPPPPLLLLLLLLLGGASA). A disulfide bridge links Cys-52 with Cys-75. Residue Asn-103 is glycosylated (N-linked (GlcNAc...) asparagine). Cystine bridges form between Cys-107–Cys-143, Cys-188–Cys-260, Cys-191–Cys-284, and Cys-201–Cys-306.

Belongs to the meteorin family. N-glycosylated. In terms of tissue distribution, highly expressed in subcutaneous adipose tissue.

It is found in the secreted. Hormone induced following exercise or cold exposure that promotes energy expenditure. Induced either in the skeletal muscle after exercise or in adipose tissue following cold exposure and is present in the circulation. Able to stimulate energy expenditure associated with the browning of the white fat depots and improves glucose tolerance. Does not promote an increase in a thermogenic gene program via direct action on adipocytes, but acts by stimulating several immune cell subtypes to enter the adipose tissue and activate their prothermogenic actions. Stimulates an eosinophil-dependent increase in IL4 expression and promotes alternative activation of adipose tissue macrophages, which are required for the increased expression of the thermogenic and anti-inflammatory gene programs in fat. Required for some cold-induced thermogenic responses, suggesting a role in metabolic adaptations to cold temperatures. This chain is Meteorin-like protein (Metrnl), found in Mus musculus (Mouse).